Here is a 183-residue protein sequence, read N- to C-terminus: MNSIVNITPIIIILSEHSSEHTFGFNSDIFEANVINILLLLFGLIYVLKQSLGSTLNERQLKVLAAIQESEERLEQASSRLSESEKQLAQTQIIINQIKKEAQLTAEKVRSSILAQGQIDIERLAITGKSNIETAEKQIRRQIQQQIAFLALKKVTLQLENQMSSDIQLRIIDNNIAKLGDQL.

Residues 28–48 (DIFEANVINILLLLFGLIYVL) form a helical membrane-spanning segment.

Belongs to the ATPase B chain family. In terms of assembly, F-type ATPases have 2 components, F(1) - the catalytic core - and F(0) - the membrane proton channel. F(1) has five subunits: alpha(3), beta(3), gamma(1), delta(1), epsilon(1). F(0) has four main subunits: a(1), b(1), b'(1) and c(10-14). The alpha and beta chains form an alternating ring which encloses part of the gamma chain. F(1) is attached to F(0) by a central stalk formed by the gamma and epsilon chains, while a peripheral stalk is formed by the delta, b and b' chains.

It is found in the plastid. Its subcellular location is the chloroplast thylakoid membrane. F(1)F(0) ATP synthase produces ATP from ADP in the presence of a proton or sodium gradient. F-type ATPases consist of two structural domains, F(1) containing the extramembraneous catalytic core and F(0) containing the membrane proton channel, linked together by a central stalk and a peripheral stalk. During catalysis, ATP synthesis in the catalytic domain of F(1) is coupled via a rotary mechanism of the central stalk subunits to proton translocation. Functionally, component of the F(0) channel, it forms part of the peripheral stalk, linking F(1) to F(0). The polypeptide is ATP synthase subunit b, chloroplastic (Porphyra purpurea (Red seaweed)).